The chain runs to 399 residues: CCA-adding enzyme (399 aa).

Positions 32 and 35 each coordinate ATP. Residues glycine 32 and arginine 35 each contribute to the CTP site. Positions 45 and 47 each coordinate Mg(2+). The ATP site is built by arginine 116, aspartate 159, arginine 162, arginine 165, and arginine 168. CTP is bound by residues arginine 116, aspartate 159, arginine 162, arginine 165, and arginine 168.

The protein belongs to the tRNA nucleotidyltransferase/poly(A) polymerase family. Bacterial CCA-adding enzyme type 3 subfamily. Homodimer. The cofactor is Mg(2+).

The catalysed reaction is a tRNA precursor + 2 CTP + ATP = a tRNA with a 3' CCA end + 3 diphosphate. It carries out the reaction a tRNA with a 3' CCA end + 2 CTP + ATP = a tRNA with a 3' CCACCA end + 3 diphosphate. Its function is as follows. Catalyzes the addition and repair of the essential 3'-terminal CCA sequence in tRNAs without using a nucleic acid template. Adds these three nucleotides in the order of C, C, and A to the tRNA nucleotide-73, using CTP and ATP as substrates and producing inorganic pyrophosphate. tRNA 3'-terminal CCA addition is required both for tRNA processing and repair. Also involved in tRNA surveillance by mediating tandem CCA addition to generate a CCACCA at the 3' terminus of unstable tRNAs. While stable tRNAs receive only 3'-terminal CCA, unstable tRNAs are marked with CCACCA and rapidly degraded. The chain is CCA-adding enzyme from Streptococcus gordonii (strain Challis / ATCC 35105 / BCRC 15272 / CH1 / DL1 / V288).